Here is a 73-residue protein sequence, read N- to C-terminus: Biotin/lipoyl attachment protein (73 aa).

A Biotinyl-binding domain is found at 2-69 (TVSIQMAGNL…NEGDVLLELS (68 aa)). K35 is subject to N6-biotinyllysine; alternate. K35 is modified (N6-lipoyllysine; alternate).

Can be both biotinylated and lipoylated on Lys-35 upon overexpression in E.coli depending on the growth medium; the nature of the modification in situ in B.subtilis is unknown.

In Bacillus subtilis (strain 168), this protein is Biotin/lipoyl attachment protein (yngHB).